Consider the following 585-residue polypeptide: Eukaryotic translation initiation factor 3 subunit D (585 aa).

Residues 43 to 60 (LGRMADWTGDGKDRDRGG) show a composition bias toward basic and acidic residues. Disordered stretches follow at residues 43–62 (LGRM…GGRQ) and 109–152 (RGGG…NRSA). Residues 109–130 (RGGGTVFRGRGQRGVGQRGGRA) are compositionally biased toward gly residues. An RNA gate region spans residues 300–314 (SIDLVTVNENAADAP). The segment at 560–585 (VPPNTFEEDDEAAEEQEEKAEEESEE) is disordered. Positions 565–585 (FEEDDEAAEEQEEKAEEESEE) are enriched in acidic residues.

It belongs to the eIF-3 subunit D family. As to quaternary structure, component of the eukaryotic translation initiation factor 3 (eIF-3) complex.

The protein localises to the cytoplasm. Its function is as follows. mRNA cap-binding component of the eukaryotic translation initiation factor 3 (eIF-3) complex, which is involved in protein synthesis of a specialized repertoire of mRNAs and, together with other initiation factors, stimulates binding of mRNA and methionyl-tRNAi to the 40S ribosome. The eIF-3 complex specifically targets and initiates translation of a subset of mRNAs involved in cell proliferation. In the eIF-3 complex, eif3d specifically recognizes and binds the 7-methylguanosine cap of a subset of mRNAs. The chain is Eukaryotic translation initiation factor 3 subunit D from Neosartorya fischeri (strain ATCC 1020 / DSM 3700 / CBS 544.65 / FGSC A1164 / JCM 1740 / NRRL 181 / WB 181) (Aspergillus fischerianus).